The chain runs to 317 residues: Protein RTA1 (317 aa).

The Extracellular segment spans residues 1 to 16; the sequence is MAKDGFELYRYTPELG. Residues 17–37 traverse the membrane as a helical segment; sequence ASILFTVLFAVSGVAFVILLF. Over 38-64 the chain is Cytoplasmic; the sequence is HYSVKSKRRVGSLMKSQPVLRYYGTVN. A helical membrane pass occupies residues 65 to 85; the sequence is LAGAYIPFIFGCFVECVGFAF. The Extracellular portion of the chain corresponds to 86 to 99; sequence RCKSSKDTTLLNPY. A helical transmembrane segment spans residues 100–120; it reads IIQTVFLLVSPTLYAASIYMI. Residues 121 to 142 are Cytoplasmic-facing; it reads FGRMATLLFAENLMIMPARFNT. Residues 143–163 form a helical membrane-spanning segment; sequence TIFVIGDVGSLLLQAIGGAMM. Over 164–178 the chain is Extracellular; it reads SKVTSASSGSHLVTA. A helical membrane pass occupies residues 179–199; it reads GLFIQIAFFGLFIINEVLFIF. Over 200 to 214 the chain is Cytoplasmic; the sequence is KMSKKPTNVSVRYGS. The helical transmembrane segment at 215–235 threads the bilayer; the sequence is WKYLNIALLVNSFLILIRSIV. At 236–259 the chain is on the extracellular side; sequence RAVEFIQGYDGEIASHEWYLYIFD. The chain crosses the membrane as a helical span at residues 260–280; it reads GLPMFLLVLIFIVAFPLINIF. Residues 281-317 are Cytoplasmic-facing; sequence RIHEESIQAQQSARFDGTDYPDVEVTSIEEDLASKSE.

Belongs to the lipid-translocating exporter (LTE) (TC 9.A.26.1) family.

It localises to the membrane. In terms of biological role, involved in 7-aminocholesterol resistance. This is Protein RTA1 (RTA1) from Saccharomyces cerevisiae (strain ATCC 204508 / S288c) (Baker's yeast).